Consider the following 1374-residue polypeptide: DNA-directed RNA polymerase subunit beta (1374 aa).

The protein belongs to the RNA polymerase beta chain family. As to quaternary structure, the RNAP catalytic core consists of 2 alpha, 1 beta, 1 beta' and 1 omega subunit. When a sigma factor is associated with the core the holoenzyme is formed, which can initiate transcription.

It carries out the reaction RNA(n) + a ribonucleoside 5'-triphosphate = RNA(n+1) + diphosphate. In terms of biological role, DNA-dependent RNA polymerase catalyzes the transcription of DNA into RNA using the four ribonucleoside triphosphates as substrates. This chain is DNA-directed RNA polymerase subunit beta, found in Rickettsia typhi (strain ATCC VR-144 / Wilmington).